The following is a 130-amino-acid chain: UPF0251 protein MmarC7_1642 (130 aa).

The protein belongs to the UPF0251 family.

The polypeptide is UPF0251 protein MmarC7_1642 (Methanococcus maripaludis (strain C7 / ATCC BAA-1331)).